The primary structure comprises 459 residues: Type IV methyl-directed restriction enzyme EcoKMcrB subunit (459 aa).

GTP is bound by residues 201–208, 300–303, and 333–336; these read GPPGVGKT, DKRG, and NTAD.

Functionally, recognizes N4- and C5-methylcytosine (and 5-hydroxy-methylcytosines) produced by a broad range of DNA methylases and appears to act against 5-methylcytosine preceded by a purine residue. Binds to DNA containing methylated cytosines; also binds to GTP. Isoform 33 kDa is less active than isoform 51 kDa and may play a role in regulating the activity of isoform 51 kDa by competing with it in DNA and protein binding abilities. This Escherichia coli (strain K12) protein is Type IV methyl-directed restriction enzyme EcoKMcrB subunit (mcrB).